We begin with the raw amino-acid sequence, 596 residues long: Actin-histidine N-methyltransferase (596 aa).

Residues 1–22 (MGKKSRVKTQKSGTGATATVSP) form a disordered region. A compositionally biased stretch (polar residues) spans 10 to 20 (QKSGTGATATV). S-adenosyl-L-methionine is bound by residues R75, 104-106 (EGF), R254, 275-279 (DMCNH), and 325-327 (SGF). Residues 94–314 (EGFEMVNFKE…AGDQIYIFYG (221 aa)) enclose the SET domain. The interval 551-596 (GLVNGESLIPNGTRSENESLSPEESENTTGDTEESSGSMDAVKERL) is disordered. A compositionally biased stretch (acidic residues) spans 571-584 (SPEESENTTGDTEE).

This sequence belongs to the class V-like SAM-binding methyltransferase superfamily. SETD3 actin-histidine methyltransferase family. Interacts with MYOD1. Post-translationally, phosphorylated by GSK3B, which is required for recognition by the SCF(FBXW7) complex and subsequent degradation. In terms of processing, ubiquitinated by the SCF(FBXW7) complex following phosphorylation by GSK3B, leading to its degradation by the proteasome.

Its subcellular location is the cytoplasm. It is found in the nucleus. The catalysed reaction is L-histidyl-[protein] + S-adenosyl-L-methionine = N(tele)-methyl-L-histidyl-[protein] + S-adenosyl-L-homocysteine + H(+). Protein-histidine N-methyltransferase that specifically mediates 3-methylhistidine (tele-methylhistidine) methylation of actin at 'His-73'. Histidine methylation of actin is required for smooth muscle contraction of the laboring uterus during delivery. Does not have protein-lysine N-methyltransferase activity and probably only catalyzes histidine methylation of actin. The chain is Actin-histidine N-methyltransferase from Rattus norvegicus (Rat).